The primary structure comprises 203 residues: uncharacterized protein (203 aa).

A disordered region spans residues 174–203 (LASSKNPRARSPGLDPLGSSETLWSHRGGH).

This is an uncharacterized protein from Homo sapiens (Human).